Consider the following 638-residue polypeptide: DNA mismatch repair protein MutL (638 aa).

A disordered region spans residues 398 to 435; it reads GREGTSFGTQTNAFGSMATPRDNSRGSYSAGESRQRTE.

Belongs to the DNA mismatch repair MutL/HexB family.

In terms of biological role, this protein is involved in the repair of mismatches in DNA. It is required for dam-dependent methyl-directed DNA mismatch repair. May act as a 'molecular matchmaker', a protein that promotes the formation of a stable complex between two or more DNA-binding proteins in an ATP-dependent manner without itself being part of a final effector complex. The sequence is that of DNA mismatch repair protein MutL from Shewanella baltica (strain OS155 / ATCC BAA-1091).